A 219-amino-acid polypeptide reads, in one-letter code: Large ribosomal subunit protein bL31m (219 aa).

Composition is skewed to basic and acidic residues over residues 169-181 (KKEEEEAAKKAAE) and 210-219 (KETRHYGKKK). Disordered stretches follow at residues 169-188 (KKEEEEAAKKAAEAEEADPF) and 200-219 (TENMNPGLNFKETRHYGKKK).

It belongs to the bacterial ribosomal protein bL31 family. Highly divergent. As to quaternary structure, component of the mitochondrial large ribosomal subunit (mt-LSU). Mature N.crassa 74S mitochondrial ribosomes consist of a small (37S) and a large (54S) subunit. The 37S small subunit contains a 16S ribosomal RNA (16S mt-rRNA) and 32 different proteins. The 54S large subunit contains a 23S rRNA (23S mt-rRNA) and 42 different proteins. bL31m bridges the mt-LSU central protuberance and the mt-SSU head.

It is found in the mitochondrion. Component of the mitochondrial ribosome (mitoribosome), a dedicated translation machinery responsible for the synthesis of mitochondrial genome-encoded proteins, including at least some of the essential transmembrane subunits of the mitochondrial respiratory chain. The mitoribosomes are attached to the mitochondrial inner membrane and translation products are cotranslationally integrated into the membrane. The chain is Large ribosomal subunit protein bL31m (mrpl36) from Neurospora crassa (strain ATCC 24698 / 74-OR23-1A / CBS 708.71 / DSM 1257 / FGSC 987).